The sequence spans 280 residues: Tumor necrosis factor ligand superfamily member 6 (280 aa).

Residues 1 to 80 (MQQPLNYPYP…KTRRDHNTGL (80 aa)) are Cytoplasmic-facing. Positions 20–71 (SSPWGPPGSVLPCPSSVPGRPGQRRPPPPPPPTLPPPPPPPPLPPLPLPPLK) are disordered. The span at 43–69 (RRPPPPPPPTLPPPPPPPPLPPLPLPP) shows a compositional bias: pro residues. Residues 81–101 (CLLVMFFMVLVALVGLGLGMF) traverse the membrane as a helical; Signal-anchor for type II membrane protein segment. Topologically, residues 102–280 (QLFHLQKELA…SKTFFGLYKL (179 aa)) are extracellular. The THD domain maps to 144 to 280 (KVAHLTGKPN…SKTFFGLYKL (137 aa)). Asparagine 183 is a glycosylation site (N-linked (GlcNAc...) asparagine). Cysteines 201 and 232 form a disulfide. 2 N-linked (GlcNAc...) asparagine glycosylation sites follow: asparagine 249 and asparagine 259.

This sequence belongs to the tumor necrosis factor family. In terms of assembly, homotrimer. Interacts with ARHGAP9, BAIAP2L1, BTK, CACNB3, CACNB4, CRK, DLG2, DNMBP, DOCK4, EPS8L3, FGR, FYB1, FYN, HCK, ITK, ITSN2, KALRN, LYN, MACC1, MIA, MPP4, MYO15A, NCF1, NCK1, NCK2, NCKIPSD, OSTF1, PIK3R1, PSTPIP1, RIMBP3C, SAMSN1, SH3GL3, SH3PXD2B, SH3PXD2A, SH3RF2, SKAP2, SNX33, SNX9, SORBS3, SPTA1, SRC, SRGAP1, SRGAP2, SRGAP3, TEC, TJP3 and YES1. In terms of processing, the soluble form derives from the membrane form by proteolytic processing. The membrane-bound form undergoes two successive intramembrane proteolytic cleavages. The first one is processed by ADAM10 producing an N-terminal fragment, which lacks the receptor-binding extracellular domain. This ADAM10-processed FasL (FasL APL) remnant form is still membrane anchored and further processed by SPPL2A that liberates the FasL intracellular domain (FasL ICD). FasL shedding by ADAM10 is a prerequisite for subsequent intramembrane cleavage by SPPL2A in T-cells. Phosphorylated by FGR on tyrosine residues; this is required for ubiquitination and subsequent internalization. Post-translationally, N-glycosylated. Glycosylation enhances apoptotic activity. In terms of processing, monoubiquitinated.

The protein localises to the cell membrane. Its subcellular location is the cytoplasmic vesicle lumen. It localises to the lysosome lumen. It is found in the secreted. The protein resides in the nucleus. Functionally, cytokine that binds to TNFRSF6/FAS, a receptor that transduces the apoptotic signal into cells. Involved in cytotoxic T-cell-mediated apoptosis, natural killer cell-mediated apoptosis and in T-cell development. Initiates fratricidal/suicidal activation-induced cell death (AICD) in antigen-activated T-cells contributing to the termination of immune responses. TNFRSF6/FAS-mediated apoptosis has also a role in the induction of peripheral tolerance. Binds to TNFRSF6B/DcR3, a decoy receptor that blocks apoptosis. In terms of biological role, induces FAS-mediated activation of NF-kappa-B, initiating non-apoptotic signaling pathways. Can induce apoptosis but does not appear to be essential for this process. Its function is as follows. Cytoplasmic form induces gene transcription inhibition. The sequence is that of Tumor necrosis factor ligand superfamily member 6 (FASLG) from Felis catus (Cat).